A 490-amino-acid chain; its full sequence is Kinetochore protein Nuf2 homolog (490 aa).

2 coiled-coil regions span residues 146–280 (DRKF…KLEA) and 310–407 (DLID…SETI). 2 disordered regions span residues 346–365 (QSET…EERQ) and 468–490 (IDAG…SVFK).

It belongs to the NUF2 family. In terms of assembly, component of the NDC80 complex, which is composed of at least ndc-80 and him-10. The NDC80 complex interacts with knl-1.

It is found in the nucleus. The protein localises to the chromosome. It localises to the centromere. Its subcellular location is the kinetochore. Acts as a component of the essential kinetochore-associated NDC80 complex, which is required for chromosome segregation in mitosis and meiosis and spindle checkpoint activity. The ndc-80 complex synergistically enhances the affinity of the ska-1 complex for microtubules and may allow the ndc-80 complex to track depolymerizing microtubules. The sequence is that of Kinetochore protein Nuf2 homolog (him-10) from Caenorhabditis elegans.